The sequence spans 131 residues: D-ribose pyranase (131 aa).

The active-site Proton donor is His20. Residues Asp28, His98, and 120–122 each bind substrate; that span reads YAN.

Belongs to the RbsD / FucU family. RbsD subfamily. As to quaternary structure, homodecamer.

The protein localises to the cytoplasm. The enzyme catalyses beta-D-ribopyranose = beta-D-ribofuranose. It functions in the pathway carbohydrate metabolism; D-ribose degradation; D-ribose 5-phosphate from beta-D-ribopyranose: step 1/2. Its function is as follows. Catalyzes the interconversion of beta-pyran and beta-furan forms of D-ribose. This chain is D-ribose pyranase, found in Bacillus cereus (strain ATCC 14579 / DSM 31 / CCUG 7414 / JCM 2152 / NBRC 15305 / NCIMB 9373 / NCTC 2599 / NRRL B-3711).